The sequence spans 155 residues: Ribosome maturation factor RimP (155 aa).

Belongs to the RimP family.

The protein resides in the cytoplasm. Its function is as follows. Required for maturation of 30S ribosomal subunits. This is Ribosome maturation factor RimP from Parasynechococcus marenigrum (strain WH8102).